Consider the following 210-residue polypeptide: Thymidylate kinase (210 aa).

An ATP-binding site is contributed by 13-20 (GLEGAGKS).

It belongs to the thymidylate kinase family.

The enzyme catalyses dTMP + ATP = dTDP + ADP. Phosphorylation of dTMP to form dTDP in both de novo and salvage pathways of dTTP synthesis. This Shewanella loihica (strain ATCC BAA-1088 / PV-4) protein is Thymidylate kinase.